The following is a 137-amino-acid chain: Small ribosomal subunit protein uS12 (137 aa).

Positions 1 to 28 are disordered; that stretch reads MPTINQLVRKPRKSKAKKSDSPALNKGF. D102 carries the 3-methylthioaspartic acid modification.

The protein belongs to the universal ribosomal protein uS12 family. Part of the 30S ribosomal subunit. Contacts proteins S8 and S17. May interact with IF1 in the 30S initiation complex.

Its function is as follows. With S4 and S5 plays an important role in translational accuracy. Interacts with and stabilizes bases of the 16S rRNA that are involved in tRNA selection in the A site and with the mRNA backbone. Located at the interface of the 30S and 50S subunits, it traverses the body of the 30S subunit contacting proteins on the other side and probably holding the rRNA structure together. The combined cluster of proteins S8, S12 and S17 appears to hold together the shoulder and platform of the 30S subunit. This is Small ribosomal subunit protein uS12 from Staphylococcus carnosus (strain TM300).